The following is a 387-amino-acid chain: Phosphoglycerate kinase (387 aa).

Residues 21 to 23 (DLN), Arg36, and 59 to 62 (HLGR) each bind substrate. Lys84 carries the post-translational modification N6-acetyllysine. Residues Arg113 and Arg146 each coordinate substrate. Residues Lys197, Glu314, and 340 to 343 (GGDT) contribute to the ATP site.

It belongs to the phosphoglycerate kinase family. In terms of assembly, monomer.

It localises to the cytoplasm. It catalyses the reaction (2R)-3-phosphoglycerate + ATP = (2R)-3-phospho-glyceroyl phosphate + ADP. It functions in the pathway carbohydrate degradation; glycolysis; pyruvate from D-glyceraldehyde 3-phosphate: step 2/5. The sequence is that of Phosphoglycerate kinase from Escherichia coli O9:H4 (strain HS).